Here is a 208-residue protein sequence, read N- to C-terminus: Methyl-CpG-binding domain protein 3-like 4 (208 aa).

It belongs to the MBD3L family.

This Homo sapiens (Human) protein is Methyl-CpG-binding domain protein 3-like 4 (MBD3L4).